The sequence spans 390 residues: 23S rRNA (uracil(747)-C(5))-methyltransferase RlmC (390 aa).

4 residues coordinate [4Fe-4S] cluster: cysteine 12, cysteine 20, cysteine 23, and cysteine 100. Positions 225, 254, 275, and 322 each coordinate S-adenosyl-L-methionine. Residue cysteine 349 is the Nucleophile of the active site.

Belongs to the class I-like SAM-binding methyltransferase superfamily. RNA M5U methyltransferase family. RlmC subfamily.

It carries out the reaction uridine(747) in 23S rRNA + S-adenosyl-L-methionine = 5-methyluridine(747) in 23S rRNA + S-adenosyl-L-homocysteine + H(+). In terms of biological role, catalyzes the formation of 5-methyl-uridine at position 747 (m5U747) in 23S rRNA. The protein is 23S rRNA (uracil(747)-C(5))-methyltransferase RlmC of Shewanella baltica (strain OS155 / ATCC BAA-1091).